Here is a 170-residue protein sequence, read N- to C-terminus: NADH-quinone oxidoreductase subunit B (170 aa).

The [4Fe-4S] cluster site is built by cysteine 42, cysteine 43, cysteine 107, and cysteine 136.

This sequence belongs to the complex I 20 kDa subunit family. NDH-1 is composed of 14 different subunits. Subunits NuoB, C, D, E, F, and G constitute the peripheral sector of the complex. [4Fe-4S] cluster serves as cofactor.

It localises to the cell inner membrane. It carries out the reaction a quinone + NADH + 5 H(+)(in) = a quinol + NAD(+) + 4 H(+)(out). In terms of biological role, NDH-1 shuttles electrons from NADH, via FMN and iron-sulfur (Fe-S) centers, to quinones in the respiratory chain. The immediate electron acceptor for the enzyme in this species is believed to be ubiquinone. Couples the redox reaction to proton translocation (for every two electrons transferred, four hydrogen ions are translocated across the cytoplasmic membrane), and thus conserves the redox energy in a proton gradient. In Campylobacter curvus (strain 525.92), this protein is NADH-quinone oxidoreductase subunit B.